The following is a 476-amino-acid chain: Aspartyl/glutamyl-tRNA(Asn/Gln) amidotransferase subunit B (476 aa).

This sequence belongs to the GatB/GatE family. GatB subfamily. Heterotrimer of A, B and C subunits.

The catalysed reaction is L-glutamyl-tRNA(Gln) + L-glutamine + ATP + H2O = L-glutaminyl-tRNA(Gln) + L-glutamate + ADP + phosphate + H(+). It catalyses the reaction L-aspartyl-tRNA(Asn) + L-glutamine + ATP + H2O = L-asparaginyl-tRNA(Asn) + L-glutamate + ADP + phosphate + 2 H(+). Allows the formation of correctly charged Asn-tRNA(Asn) or Gln-tRNA(Gln) through the transamidation of misacylated Asp-tRNA(Asn) or Glu-tRNA(Gln) in organisms which lack either or both of asparaginyl-tRNA or glutaminyl-tRNA synthetases. The reaction takes place in the presence of glutamine and ATP through an activated phospho-Asp-tRNA(Asn) or phospho-Glu-tRNA(Gln). The protein is Aspartyl/glutamyl-tRNA(Asn/Gln) amidotransferase subunit B of Bacillus cytotoxicus (strain DSM 22905 / CIP 110041 / 391-98 / NVH 391-98).